The primary structure comprises 489 residues: Lysine--tRNA ligase (489 aa).

The Mg(2+) site is built by Glu-399 and Glu-406.

It belongs to the class-II aminoacyl-tRNA synthetase family. In terms of assembly, homodimer. Mg(2+) is required as a cofactor.

It is found in the cytoplasm. It catalyses the reaction tRNA(Lys) + L-lysine + ATP = L-lysyl-tRNA(Lys) + AMP + diphosphate. The polypeptide is Lysine--tRNA ligase (Roseiflexus castenholzii (strain DSM 13941 / HLO8)).